The sequence spans 23 residues: Retinol-binding protein 3 (23 aa).

The protein resides in the secreted. It localises to the extracellular space. It is found in the extracellular matrix. The protein localises to the interphotoreceptor matrix. Its function is as follows. IRBP shuttles 11-cis and all trans retinoids between the retinol isomerase in the pigment epithelium and the visual pigments in the photoreceptor cells of the retina. The protein is Retinol-binding protein 3 (RBP3) of Oryctolagus cuniculus (Rabbit).